A 727-amino-acid polypeptide reads, in one-letter code: Prolyl endopeptidase-like (727 aa).

An N-acetylmethionine modification is found at Met-1. Residues Ser-559, Asp-645, and His-690 each act as charge relay system in the active site.

Belongs to the peptidase S9A family. In terms of assembly, homodimer. Interacts with the AP-1 complex. As to expression, expressed in pyramidal neurons of the temporal cortex and neocortex (at protein level). Widely expressed. Expressed at higher level in brain, skeletal muscle, heart and kidney. Expressed at the endplates in the neuromuscular junction.

Its subcellular location is the cytoplasm. It is found in the cytosol. The protein resides in the golgi apparatus. It localises to the trans-Golgi network. The protein localises to the cytoskeleton. Its subcellular location is the nucleus. Its activity is regulated as follows. Inhibited by PMSF and Prefabloc, as well as leupeptin at high concentrations. Partially inhibited by TPCK, a chymotrypsin inhibitor and E64, a cysteine protease inhibitor. Not affected by 4-amidinophenyl-methanesulfonyl fluoride (APMSF), pepstatin or EDTA. Inhibited by 1-isobutyl-3-oxo-3,5,6,7-tetrahydro-2H-cyclopenta[c]pyridine-4-carbonitrile. Serine peptidase whose precise substrate specificity remains unclear. Does not cleave peptides after a arginine or lysine residue. Regulates trans-Golgi network morphology and sorting by regulating the membrane binding of the AP-1 complex. May play a role in the regulation of synaptic vesicle exocytosis. The polypeptide is Prolyl endopeptidase-like (PREPL) (Homo sapiens (Human)).